The chain runs to 113 residues: Large ribosomal subunit protein uL24 (113 aa).

Belongs to the universal ribosomal protein uL24 family. Part of the 50S ribosomal subunit.

Its function is as follows. One of two assembly initiator proteins, it binds directly to the 5'-end of the 23S rRNA, where it nucleates assembly of the 50S subunit. One of the proteins that surrounds the polypeptide exit tunnel on the outside of the subunit. The sequence is that of Large ribosomal subunit protein uL24 from Micrococcus luteus (strain ATCC 4698 / DSM 20030 / JCM 1464 / CCM 169 / CCUG 5858 / IAM 1056 / NBRC 3333 / NCIMB 9278 / NCTC 2665 / VKM Ac-2230) (Micrococcus lysodeikticus).